Here is a 182-residue protein sequence, read N- to C-terminus: UPF0316 protein BCB4264_A3368 (182 aa).

The next 3 helical transmembrane spans lie at 6 to 26 (LIFVLQIIYVPILTIRTILLV), 32 to 52 (SAAGVGLLEGAIYIVSLGIVF), and 58 to 78 (WMNIVAYVIGFSAGLLLGGYI).

It belongs to the UPF0316 family.

The protein resides in the cell membrane. This Bacillus cereus (strain B4264) protein is UPF0316 protein BCB4264_A3368.